Reading from the N-terminus, the 449-residue chain is Tubulin alpha-2 chain (449 aa).

Residue glutamine 11 participates in GTP binding. At lysine 40 the chain carries N6-acetyllysine. GTP is bound by residues serine 140, glycine 144, threonine 145, threonine 179, asparagine 206, and asparagine 228. Residue glutamate 254 is part of the active site.

The protein belongs to the tubulin family. Dimer of alpha and beta chains. A typical microtubule is a hollow water-filled tube with an outer diameter of 25 nm and an inner diameter of 15 nM. Alpha-beta heterodimers associate head-to-tail to form protofilaments running lengthwise along the microtubule wall with the beta-tubulin subunit facing the microtubule plus end conferring a structural polarity. Microtubules usually have 13 protofilaments but different protofilament numbers can be found in some organisms and specialized cells. Acetylation of alpha chains at Lys-40 stabilizes microtubules and affects affinity and processivity of microtubule motors. This modification has a role in multiple cellular functions, ranging from cell motility, cell cycle progression or cell differentiation to intracellular trafficking and signaling.

The protein localises to the cytoplasm. It localises to the cytoskeleton. It carries out the reaction GTP + H2O = GDP + phosphate + H(+). In terms of biological role, tubulin is the major constituent of microtubules, a cylinder consisting of laterally associated linear protofilaments composed of alpha- and beta-tubulin heterodimers. Microtubules grow by the addition of GTP-tubulin dimers to the microtubule end, where a stabilizing cap forms. Below the cap, tubulin dimers are in GDP-bound state, owing to GTPase activity of alpha-tubulin. This Stylonychia lemnae (Ciliate) protein is Tubulin alpha-2 chain.